A 174-amino-acid chain; its full sequence is Gamma-crystallin D (174 aa).

2 consecutive Beta/gamma crystallin 'Greek key' domains span residues 2-40 (GKITLYEDRGFQGRHYECSSDHPNLQPYLSRCNSARVDS) and 41-83 (GCWM…RLIP). The tract at residues 84-87 (HSGS) is connecting peptide. 2 Beta/gamma crystallin 'Greek key' domains span residues 88 to 128 (HRIR…NVLE) and 129 to 171 (GSWV…RRVI).

It belongs to the beta/gamma-crystallin family. As to quaternary structure, monomer.

Its function is as follows. Crystallins are the dominant structural components of the vertebrate eye lens. The chain is Gamma-crystallin D (CRYGD) from Homo sapiens (Human).